Reading from the N-terminus, the 482-residue chain is MKSCEHELLKTRRGKSREVSSRFLSSPSASSSPNRRNSTSNSSRDDQNNNGVKGHLGLKKHDRMSDGTRVCFGLPNQSSIEVDTKENRMPSPWINDEDNVILPGRFSVDECALYRASSRRNSCSLLYESFNDETDSELSDVSCASSLSTNRSSWNHKPGIKVSSKYLHDLTAKPSKGNNKTKLRSQDDSQRTNSSKGIENRLQRNNSVSRYGSSMSQWALSPGRSLDTQAVTVPSSKLKPPRGKGVGKLINLGFDFFRSKNKSSPFTSPLKPKTCDTESAHQLKLMNNRLLQWRFVNARACDVNKNVASQEKNQLLCAWDTLIKLNNLVLQERIKLQKKNLEMKLNYVFLSQVKHLEAWEDMEIQHLSSLSIIRDSLHSVLSRLPLKEGAKVNLESAVSIIKNAEAVTDAIISTVDDYAPTMEGIVPLASQLAEVVVQEKLMLEKCHDLLRMISELEMQERSLKCCFLIQHKQTFDTNLLKH.

Residues 1–20 (MKSCEHELLKTRRGKSREVS) are compositionally biased toward basic and acidic residues. Disordered stretches follow at residues 1-60 (MKSC…GLKK) and 171-220 (TAKP…QWAL). A compositionally biased stretch (low complexity) spans 21–42 (SRFLSSPSASSSPNRRNSTSNS). Polar residues predominate over residues 191–219 (RTNSSKGIENRLQRNNSVSRYGSSMSQWA). A QWRF motif motif is present at residues 292–295 (QWRF).

This sequence belongs to the QWRF family.

The polypeptide is QWRF motif-containing protein 3 (QWRF3) (Arabidopsis thaliana (Mouse-ear cress)).